The chain runs to 418 residues: MWCRRLACLLSVPCQHTRHRLLGPSCGRRTFTAAVARWHHTAPESLSCAWQLHGDHLELRYADTLMRFDFVWLRDHCRSASCYNAKTNQRSLDTASVDLSIKPKAVRVDETTLFLTWPDGHVTRYGLQWLVKNSYEGQKQQVMHPRILWNAEIYRQAQVPSVDCQSFLETDEGLKEFLQNFLLYGIAFVENVTPTKEDTQILAERISLIRETIYGRMWYFTSDFSRGDTAYTKLALDRHTDTTYFQEPCGIQVFHCLKHEGTGGRTLLVDGFYAAEQVLRQAPDQFELLSKVPLKHEYIENVGDCHNHMIGVGPVLNVYPWNNELYLIRYNNYDRAVINTVPYDVVNRWYTAHRTLTTELRRPENELWVKLKPGKALFIDNWRVLHGREAFTGYRQLCGCYLTRDDVLNTARLLGLQA.

Residues His-239, Asp-241, and His-386 each contribute to the Fe cation site.

This sequence belongs to the gamma-BBH/TMLD family. In terms of assembly, homodimer. Requires Fe(2+) as cofactor. L-ascorbate serves as cofactor.

The protein resides in the mitochondrion matrix. It catalyses the reaction N(6),N(6),N(6)-trimethyl-L-lysine + 2-oxoglutarate + O2 = (3S)-3-hydroxy-N(6),N(6),N(6)-trimethyl-L-lysine + succinate + CO2. Its pathway is amine and polyamine biosynthesis; carnitine biosynthesis. Converts trimethyllysine (TML) into hydroxytrimethyllysine (HTML). This Gallus gallus (Chicken) protein is Trimethyllysine dioxygenase, mitochondrial (TMLHE).